The sequence spans 143 residues: Large ribosomal subunit protein eL28y (143 aa).

Belongs to the eukaryotic ribosomal protein eL28 family.

In Arabidopsis thaliana (Mouse-ear cress), this protein is Large ribosomal subunit protein eL28y (RPL28C).